The sequence spans 233 residues: VIGGDECNINEHPFLVLVYYDEYQCGGTLINEEWVLTAAHCDGENMEIHLGMHSKKVPNKDRRRRVPKEKFFCDSSKNYTKWNKDIMLIRLNRPVRKSAHIAPLSLPSSPPSVGSVCRIMGWGTISPTEETYPDVPHCANINLLDYEVCRAAYPELPATSRTLCAGILEGGKDSCGGDSGGPLICNGQFQGIVSWGGDPCAQPHEPGSYTNVFDHLDWIKGIIAGNTDATCPL.

The Peptidase S1 domain occupies 1-224 (VIGGDECNIN…HLDWIKGIIA (224 aa)). Intrachain disulfides connect Cys-7–Cys-138, Cys-25–Cys-41, Cys-73–Cys-231, Cys-117–Cys-185, Cys-149–Cys-164, and Cys-175–Cys-200. His-40 serves as the catalytic Charge relay system. Asn-78 is a glycosylation site (N-linked (GlcNAc...) asparagine). The active-site Charge relay system is Asp-85. The active-site Charge relay system is the Ser-179.

Belongs to the peptidase S1 family. Snake venom subfamily. As to quaternary structure, monomer. In terms of tissue distribution, expressed by the venom gland.

Its subcellular location is the secreted. Its function is as follows. Thrombin-like snake venom serine protease that clots rabbit fibrinogen. Only the beta chain of fibrinogen (FGB) is cleaved, releasing fibrinopeptide B. Human and bovine fibrinogen are unaffected. Also cleaves Met-Lys and Arg-Ser bonds in heat-denatured bovine plasma kininogen to release Lys-bradykinin. The polypeptide is Thrombin-like enzyme elegaxobin-2 (Protobothrops elegans (Elegant pitviper)).